Here is a 709-residue protein sequence, read N- to C-terminus: Methylmalonyl-CoA mutase (709 aa).

Substrate-binding positions include 73–77, 183–185, Arg195, Lys222, His232, and 271–273; these read TIRQY, TIQ, and RLS. One can recognise a B12-binding domain in the interval 579–709; it reads RPRMLVVKMG…ILDLIREARS (131 aa). Residue His592 participates in adenosylcob(III)alamin binding.

It belongs to the methylmalonyl-CoA mutase family. In terms of assembly, homodimer. Adenosylcob(III)alamin serves as cofactor.

The enzyme catalyses (R)-methylmalonyl-CoA = succinyl-CoA. It participates in metabolic intermediate metabolism; propanoyl-CoA degradation; succinyl-CoA from propanoyl-CoA: step 3/3. Functionally, radical enzyme that catalyzes the transformation of (2R)-methylmalonyl-CoA to succinyl-CoA. Is involved in the ethylmalonyl-CoA pathway for acetyl-CoA assimilation required for R.sphaeroides growth on acetate as sole carbon source. This is Methylmalonyl-CoA mutase from Cereibacter sphaeroides (strain ATCC 17023 / DSM 158 / JCM 6121 / CCUG 31486 / LMG 2827 / NBRC 12203 / NCIMB 8253 / ATH 2.4.1.) (Rhodobacter sphaeroides).